Here is a 368-residue protein sequence, read N- to C-terminus: Proline-rich protein 5-like (368 aa).

S28 is modified (phosphoserine). Residues 312-368 (LGEESGGEDKCLLLQPSFPPPHRQCSSEPNITDGPDEPEQGATGSQEDSELNCASLS) form a disordered region. The span at 353–368 (ATGSQEDSELNCASLS) shows a compositional bias: polar residues.

This sequence belongs to the PROTOR family. In terms of assembly, interacts with the mammalian target of rapamycin complex 2 (mTORC2) which contains MTOR, MLST8, PRR5, RICTOR, MAPKAP1 and DEPTOR. Interacts with RFFL. Interacts (via C-terminus) with ZFP36 (via C-terminus); this interaction may accelerate ZFP36-mediated mRNA decay during stress. Interacts with RICTOR. Ubiquitinated. Ubiquitination by RFFL promotes proteasomal degradation of PRR5L thereby modifying the substrate-specific activity of the mTORC2 complex. Ubiquitination by RFFL is stimulated by LPA/lysophosphatidic acid.

Its function is as follows. Associates with the mTORC2 complex that regulates cellular processes including survival and organization of the cytoskeleton. Regulates the activity of the mTORC2 complex in a substrate-specific manner preventing for instance the specific phosphorylation of PKCs and thereby controlling cell migration. Plays a role in the stimulation of ZFP36-mediated mRNA decay of several ZFP36-associated mRNAs, such as TNF-alpha and GM-CSF, in response to stress. Required for ZFP36 localization to cytoplasmic stress granule (SG) and P-body (PB) in response to stress. The sequence is that of Proline-rich protein 5-like (PRR5L) from Bos taurus (Bovine).